The chain runs to 82 residues: U-actitoxin-Avd3h (82 aa).

A signal peptide spans 1–16 (MVFLLCFFLVADVSYG). Residues 21-71 (CELPKVVGPCRARFPRYYYNSSSKRCEKFIYGGCRGNANNFHTLEECEKVC) form the BPTI/Kunitz inhibitor domain. Disulfide bonds link C21-C71, C30-C54, and C46-C67. A propeptide spanning residues 76 to 82 (RDSPKEN) is cleaved from the precursor.

The protein belongs to the venom Kunitz-type family. Sea anemone type 2 potassium channel toxin subfamily.

It localises to the secreted. Its subcellular location is the nematocyst. In terms of biological role, dual-function toxin that inhibits both the serine protease trypsin (Kd=30 nM) and voltage-gated potassium channels Kv1.2/KCNA2 (IC(50)=2800 nM). In Anemonia viridis (Snakelocks anemone), this protein is U-actitoxin-Avd3h.